A 348-amino-acid chain; its full sequence is Dihydroorotase (348 aa).

2 residues coordinate Zn(2+): histidine 17 and histidine 19. Substrate contacts are provided by residues 19 to 21 (HLR) and asparagine 45. Positions 103, 140, and 178 each coordinate Zn(2+). Lysine 103 is modified (N6-carboxylysine). Position 140 (histidine 140) interacts with substrate. Leucine 223 serves as a coordination point for substrate. Residue aspartate 251 participates in Zn(2+) binding. Aspartate 251 is a catalytic residue. Substrate is bound by residues histidine 255 and alanine 267.

It belongs to the metallo-dependent hydrolases superfamily. DHOase family. Class II DHOase subfamily. In terms of assembly, homodimer. Zn(2+) is required as a cofactor.

The catalysed reaction is (S)-dihydroorotate + H2O = N-carbamoyl-L-aspartate + H(+). It functions in the pathway pyrimidine metabolism; UMP biosynthesis via de novo pathway; (S)-dihydroorotate from bicarbonate: step 3/3. In terms of biological role, catalyzes the reversible cyclization of carbamoyl aspartate to dihydroorotate. In Shigella sonnei (strain Ss046), this protein is Dihydroorotase.